Reading from the N-terminus, the 288-residue chain is Centromere protein P (288 aa).

Positions M1–S71 form a coiled coil. S38 is modified (phosphoserine).

It belongs to the CENP-P/CTF19 family. In terms of assembly, component of the CENPA-CAD complex, composed of CENPI, CENPK, CENPL, CENPO, CENPP, CENPQ, CENPR and CENPS. The CENPA-CAD complex interacts with the CENPA-NAC complex, at least composed of CENPA, CENPC, CENPH, CENPM, CENPN, CENPT and CENPU.

The protein localises to the nucleus. It is found in the chromosome. The protein resides in the centromere. In terms of biological role, component of the CENPA-CAD (nucleosome distal) complex, a complex recruited to centromeres which is involved in assembly of kinetochore proteins, mitotic progression and chromosome segregation. May be involved in incorporation of newly synthesized CENPA into centromeres via its interaction with the CENPA-NAC complex. The polypeptide is Centromere protein P (CENPP) (Homo sapiens (Human)).